The following is a 182-amino-acid chain: Transmembrane and coiled-coil domain-containing protein 2 (182 aa).

A run of 2 helical transmembrane segments spans residues I10–G30 and V50–W70. The stretch at G122–K149 forms a coiled coil.

Its subcellular location is the membrane. The chain is Transmembrane and coiled-coil domain-containing protein 2 (TMCO2) from Bos taurus (Bovine).